Reading from the N-terminus, the 499-residue chain is METEDDLCNTNWGSSSSKSREPGSSDCGNSTFAGFTSQQKWEDASILDYEMGVEPGLQESIQANVDFLQGVRAQAWDPRTMLSNLSFMEQKIHQLQDLVHLLVGRGGQLQGRQDELAAQQQQLITTDLTSIIIQLISTAGSLLPSVKHNMSTAPGPFTGQPGSAVFPYVREANNVASQSQNNNNCGAREFDLPKPVLVDEREGHVVEEHEMKDEDDVEEGENLPPGSYEILQLEKEEILAPHTHFCTICGKGFKRDANLRMHMRGHGDEYKTAAALAKPNKESVPGSEPMLIKRYSCPFLGCKRNKEHKKFQPLKTILCVKNHYKRTHCDKSFTCSRCHTKKFSVIADLKTHEKHCGKNKWLCSCGTTFSRKDKLFGHIALFQGHTPAIPLEETKPSASTSTQRGSSEGGNNNQGMVGFNLGSASNANQETTQPGMTDGRICFEESFSPMNFDTCNFGGFHEFPRLMFDDSESSFQMLIANACGFSPRNVGESVSDTSL.

Positions 1 to 31 (METEDDLCNTNWGSSSSKSREPGSSDCGNST) are disordered. The C2H2-type 1 zinc finger occupies 244 to 266 (HFCTICGKGFKRDANLRMHMRGH). The segment at 354 to 385 (KHCGKNKWLCSCGTTFSRKDKLFGHIALFQGH) adopts a C2H2-type 2; atypical zinc-finger fold. Positions 390–436 (PLEETKPSASTSTQRGSSEGGNNNQGMVGFNLGSASNANQETTQPGM) are disordered. 2 stretches are compositionally biased toward polar residues: residues 396–415 (PSAS…NNQG) and 422–435 (GSAS…TQPG).

As to expression, expressed in roots (e.g. root tips and lateral roots), leaves, flowers (e.g. stigma, sepal, anther, and filament), stems, siliques and cotyledons.

The protein resides in the nucleus. In terms of biological role, probable transcription factor. Together with STOP2, plays a critical role in tolerance to major stress factors in acid soils such as proton H(+) and aluminum ion Al(3+). Required for the expression of genes in response to acidic stress (e.g. ALMT1 and MATE), and Al-activated citrate exudation. This chain is Protein SENSITIVE TO PROTON RHIZOTOXICITY 1, found in Arabidopsis thaliana (Mouse-ear cress).